The sequence spans 90 residues: uncharacterized protein (90 aa).

The protein localises to the cytoplasm. This is an uncharacterized protein from Saccharomyces cerevisiae (strain ATCC 204508 / S288c) (Baker's yeast).